A 445-amino-acid chain; its full sequence is 3-phosphoshikimate 1-carboxyvinyltransferase (445 aa).

K34, S35, and R39 together coordinate 3-phosphoshikimate. K34 contacts phosphoenolpyruvate. G112 and R140 together coordinate phosphoenolpyruvate. The 3-phosphoshikimate site is built by S186, S187, Q188, S216, E331, and H358. Q188 serves as a coordination point for phosphoenolpyruvate. E331 acts as the Proton acceptor in catalysis. Phosphoenolpyruvate-binding residues include R362, R403, and K428.

It belongs to the EPSP synthase family. Monomer.

It is found in the cytoplasm. The enzyme catalyses 3-phosphoshikimate + phosphoenolpyruvate = 5-O-(1-carboxyvinyl)-3-phosphoshikimate + phosphate. It functions in the pathway metabolic intermediate biosynthesis; chorismate biosynthesis; chorismate from D-erythrose 4-phosphate and phosphoenolpyruvate: step 6/7. In terms of biological role, catalyzes the transfer of the enolpyruvyl moiety of phosphoenolpyruvate (PEP) to the 5-hydroxyl of shikimate-3-phosphate (S3P) to produce enolpyruvyl shikimate-3-phosphate and inorganic phosphate. The polypeptide is 3-phosphoshikimate 1-carboxyvinyltransferase (Kocuria rhizophila (strain ATCC 9341 / DSM 348 / NBRC 103217 / DC2201)).